Here is a 134-residue protein sequence, read N- to C-terminus: MQAMLPVILILLLPCIALASTATRATPEQLRKCKFQQPWSFLDCYHEKSDFPTYWIVIVGIINILSCTFFSITIYPTFNFGWNSPNALGYPQEPDEHIPLQHIQQPLALVEYENEPQPSLPPAISYFNLTGGDD.

The first 19 residues, 1-19, serve as a signal peptide directing secretion; it reads MQAMLPVILILLLPCIALA. A helical transmembrane segment spans residues 54 to 78; it reads YWIVIVGIINILSCTFFSITIYPTF.

Belongs to the adenoviridae E3_14 family. In terms of processing, phosphorylated on serine; O-glycosylated, but not N-glycosylated.

It localises to the host membrane. In terms of biological role, down-regulates the EGF receptor and prevents cytolysis by TNF. In Homo sapiens (Human), this protein is Early E3B 14.9 kDa protein.